The primary structure comprises 336 residues: Vacuolar protein sorting-associated protein 26B (336 aa).

Phosphoserine is present on residues S302, S304, and S319.

It belongs to the VPS26 family. As to quaternary structure, component of the heterotrimeric retromer cargo-selective complex (CSC), also described as vacuolar protein sorting subcomplex (VPS), formed by VPS26 (VPS26A or VPS26B), VPS29 and VPS35. The CSC has a highly elongated structure with VPS26 and VPS29 binding independently at opposite distal ends of VPS35 as central platform. The CSC is believed to associate with variable sorting nexins to form functionally distinct retromer complex variants. The originally described SNX-BAR retromer is a pentamer containing the CSC and a heterodimeric membrane-deforming subcomplex formed between SNX1 or SNX2 and SNX5 or SNX6 (also called SNX-BAR subcomplex); the respective CSC and SNX-BAR subcomplexes associate with low affinity. The CSC associates with SNX3 to form a SNX3-retromer complex. The CSC associates with SNX27, the WASH complex and the SNX-BAR subcomplex to form the SNX27-retromer complex. Interacts with VPS29, VPS35, TBC1D5, GOLPH3, SNX27.

The protein resides in the cytoplasm. Its subcellular location is the membrane. It localises to the early endosome. It is found in the late endosome. In terms of biological role, acts as a component of the retromer cargo-selective complex (CSC). The CSC is believed to be the core functional component of retromer or respective retromer complex variants acting to prevent missorting of selected transmembrane cargo proteins into the lysosomal degradation pathway. The recruitment of the CSC to the endosomal membrane involves RAB7A and SNX3. The SNX-BAR retromer mediates retrograde transport of cargo proteins from endosomes to the trans-Golgi network (TGN) and is involved in endosome-to-plasma membrane transport for cargo protein recycling. The SNX3-retromer mediates the retrograde transport of WLS distinct from the SNX-BAR retromer pathway. The SNX27-retromer is believed to be involved in endosome-to-plasma membrane trafficking and recycling of a broad spectrum of cargo proteins. The CSC seems to act as recruitment hub for other proteins, such as the WASH complex and TBC1D5. May be involved in retrograde transport of SORT1 but not of IGF2R. Acts redundantly with VSP26A in SNX-27 mediated endocytic recycling of SLC2A1/GLUT1. The chain is Vacuolar protein sorting-associated protein 26B (VPS26B) from Pongo abelii (Sumatran orangutan).